A 430-amino-acid chain; its full sequence is Adenylosuccinate synthetase (430 aa).

GTP-binding positions include 13–19 (GDEGKGK) and 41–43 (GHT). The active-site Proton acceptor is D14. D14 and G41 together coordinate Mg(2+). IMP-binding positions include 14 to 17 (DEGK), 39 to 42 (NAGH), T130, R144, Q225, T240, and R304. The active-site Proton donor is H42. 300–306 (ASTGRPR) is a substrate binding site. GTP is bound by residues R306, 332-334 (KLD), and 414-416 (STG).

The protein belongs to the adenylosuccinate synthetase family. Homodimer. It depends on Mg(2+) as a cofactor.

Its subcellular location is the cytoplasm. It catalyses the reaction IMP + L-aspartate + GTP = N(6)-(1,2-dicarboxyethyl)-AMP + GDP + phosphate + 2 H(+). The protein operates within purine metabolism; AMP biosynthesis via de novo pathway; AMP from IMP: step 1/2. In terms of biological role, plays an important role in the de novo pathway of purine nucleotide biosynthesis. Catalyzes the first committed step in the biosynthesis of AMP from IMP. This chain is Adenylosuccinate synthetase, found in Xanthomonas oryzae pv. oryzae (strain MAFF 311018).